Consider the following 223-residue polypeptide: Sporulation-specific protein 19 (223 aa).

The N-terminal stretch at 1 to 20 is a signal peptide; sequence MKKQILIVAAQSILCSTVFG. Residue Asn198 is the site of GPI-anchor amidated asparagine attachment. Positions 199 to 223 are cleaved as a propeptide — removed in mature form; sequence ASNFLTPTTVALAVLLTILLFIQAY.

In terms of processing, the GPI-anchor is attached to the protein in the endoplasmic reticulum and serves to target the protein to the cell surface. There, the glucosamine-inositol phospholipid moiety is cleaved off and the GPI-modified mannoprotein is covalently attached via its lipidless GPI glycan remnant to the 1,6-beta-glucan of the outer cell wall layer.

The protein resides in the secreted. It is found in the cell wall. Its subcellular location is the membrane. In terms of biological role, involved in sporulation. Essential for completion of the nuclear division. This Saccharomyces cerevisiae (strain ATCC 204508 / S288c) (Baker's yeast) protein is Sporulation-specific protein 19 (SPO19).